Here is a 412-residue protein sequence, read N- to C-terminus: Glucose-1-phosphate adenylyltransferase (412 aa).

Alpha-D-glucose 1-phosphate-binding positions include G169, 184–185 (EK), and S201.

It belongs to the bacterial/plant glucose-1-phosphate adenylyltransferase family. In terms of assembly, homotetramer.

It catalyses the reaction alpha-D-glucose 1-phosphate + ATP + H(+) = ADP-alpha-D-glucose + diphosphate. Its pathway is glycan biosynthesis; glycogen biosynthesis. Its function is as follows. Involved in the biosynthesis of ADP-glucose, a building block required for the elongation reactions to produce glycogen. Catalyzes the reaction between ATP and alpha-D-glucose 1-phosphate (G1P) to produce pyrophosphate and ADP-Glc. In Geobacter metallireducens (strain ATCC 53774 / DSM 7210 / GS-15), this protein is Glucose-1-phosphate adenylyltransferase.